The chain runs to 129 residues: MTPLDVMWVGLGGGVGSLGRWWIGRIVGEYHHGAFPLGTFLINISGAFVIGYLSVLFGVDWHDRYGTMLNAGVLTGILGGYTTFSSMQLDAVKLSHKGQGGLAVFYLVASVLSGLFAAWLDAMLAHLQG.

A run of 4 helical transmembrane segments spans residues 4–24 (LDVM…WWIG), 39–59 (TFLI…LFGV), 65–85 (YGTM…TTFS), and 100–120 (GGLA…AAWL). The Na(+) site is built by Gly79 and Thr82.

It belongs to the fluoride channel Fluc/FEX (TC 1.A.43) family.

It is found in the cell inner membrane. The catalysed reaction is fluoride(in) = fluoride(out). With respect to regulation, na(+) is not transported, but it plays an essential structural role and its presence is essential for fluoride channel function. Functionally, fluoride-specific ion channel. Important for reducing fluoride concentration in the cell, thus reducing its toxicity. The polypeptide is Fluoride-specific ion channel FluC 2 (Brucella suis biovar 1 (strain 1330)).